We begin with the raw amino-acid sequence, 553 residues long: Capsid protein VP1 (553 aa).

It belongs to the microviridae F protein family.

It is found in the virion. Its subcellular location is the host cytoplasm. Its function is as follows. Assembles to form an icosahedral capsid with a T=1 symmetry. The chain is Capsid protein VP1 from Spiroplasma virus 4 (SpV4).